A 409-amino-acid chain; its full sequence is Probable tRNA N6-adenosine threonylcarbamoyltransferase, mitochondrial (409 aa).

The N-terminal 31 residues, 1 to 31, are a transit peptide targeting the mitochondrion; that stretch reads MHALRNFAGNGIANVFGCGIRRRLSYVLGIE. A divalent metal cation-binding residues include His135 and His139. Substrate is bound by residues 159 to 163, Asp192, Gly212, Glu216, 322 to 323, and Ser350; these read LASGG and NN. Asp351 contributes to the a divalent metal cation binding site.

Belongs to the KAE1 / TsaD family. Homodimer. Requires a divalent metal cation as cofactor.

It is found in the mitochondrion. The enzyme catalyses L-threonylcarbamoyladenylate + adenosine(37) in tRNA = N(6)-L-threonylcarbamoyladenosine(37) in tRNA + AMP + H(+). Required for the formation of a threonylcarbamoyl group on adenosine at position 37 (t(6)A37) in mitochondrial tRNAs that read codons beginning with adenine. Probably involved in the transfer of the threonylcarbamoyl moiety of threonylcarbamoyl-AMP (TC-AMP) to the N6 group of A37. Involved in mitochondrial genome maintenance. The chain is Probable tRNA N6-adenosine threonylcarbamoyltransferase, mitochondrial from Drosophila melanogaster (Fruit fly).